The chain runs to 1128 residues: Nck-associated protein 1 (1128 aa).

The residue at position 2 (serine 2) is an N-acetylserine. The disordered stretch occupies residues 640–665; that stretch reads AVNKKSKKQTGKKGEPEREKPGVESM. Residues 651-665 show a composition bias toward basic and acidic residues; that stretch reads KKGEPEREKPGVESM. The chain crosses the membrane as a helical span at residues 995–1015; it reads IACLLMVFVAVSLPTLASNVM.

It belongs to the HEM-1/HEM-2 family. Component of the WAVE1 complex composed of ABI2, CYFIP1 or CYFIP2, BRK1, NCKAP1 and WASF1/WAVE1. Within the complex, a heterodimer containing NCKAP1 and CYFIP1 interacts with a heterotrimer formed by WAVE1, ABI2 and BRK1. Component of the WAVE2 complex composed of ABI1, CYFIP1/SRA1, NCKAP1/NAP1 and WASF2/WAVE2. CYFIP2 binds to activated RAC1 which causes the complex to dissociate, releasing activated WASF1. The complex can also be activated by NCK1. Associates preferentially with the first SH3 domain of NCK. Interacts with NYAP1, NYAP2 and MYO16. Interacts with TMEM132D. In terms of assembly, (Microbial infection) Interacts with human cytomegalovirus protein UL135. In terms of tissue distribution, expressed in all tissues examined except peripheral blood leukocytes, with highest expression in brain, heart, and skeletal muscle. Expressed in cells of various brain regions including Purkinje cells and dentate nucleus of the cerebellum, CA4 region and dentate gyrus of the hippocampus, and in frontal gray and white matter.

The protein localises to the cell membrane. It is found in the cell projection. Its subcellular location is the lamellipodium membrane. Functionally, part of the WAVE complex that regulates lamellipodia formation. The WAVE complex regulates actin filament reorganization via its interaction with the Arp2/3 complex. Actin remodeling activity is regulated by RAC1. As component of the WAVE1 complex, required for BDNF-NTRK2 endocytic trafficking and signaling from early endosomes. The protein is Nck-associated protein 1 (NCKAP1) of Homo sapiens (Human).